Here is a 93-residue protein sequence, read N- to C-terminus: Small ribosomal subunit protein uS19 (93 aa).

It belongs to the universal ribosomal protein uS19 family.

Protein S19 forms a complex with S13 that binds strongly to the 16S ribosomal RNA. This is Small ribosomal subunit protein uS19 from Geotalea uraniireducens (strain Rf4) (Geobacter uraniireducens).